We begin with the raw amino-acid sequence, 430 residues long: Enolase (430 aa).

Position 166 (Gln166) interacts with (2R)-2-phosphoglycerate. Glu208 serves as the catalytic Proton donor. The Mg(2+) site is built by Asp245, Glu288, and Asp315. Positions 340, 369, 370, and 391 each coordinate (2R)-2-phosphoglycerate. The active-site Proton acceptor is the Lys340.

Belongs to the enolase family. Mg(2+) serves as cofactor.

The protein resides in the cytoplasm. It localises to the secreted. It is found in the cell surface. The enzyme catalyses (2R)-2-phosphoglycerate = phosphoenolpyruvate + H2O. Its pathway is carbohydrate degradation; glycolysis; pyruvate from D-glyceraldehyde 3-phosphate: step 4/5. In terms of biological role, catalyzes the reversible conversion of 2-phosphoglycerate (2-PG) into phosphoenolpyruvate (PEP). It is essential for the degradation of carbohydrates via glycolysis. In Clostridium kluyveri (strain NBRC 12016), this protein is Enolase.